Consider the following 147-residue polypeptide: Hemoglobin subunit gamma-1 (147 aa).

Residues 3 to 147 (NFTAEDKAAI…VASALGSRYH (145 aa)) enclose the Globin domain. Thr-13 carries the post-translational modification Phosphothreonine. A phosphoserine mark is found at Ser-45, Ser-51, and Ser-53. Lys-60 carries the N6-acetyllysine modification. His-64 lines the heme b pocket. The residue at position 83 (Lys-83) is an N6-acetyllysine. His-93 lines the heme b pocket. Position 94 is an S-nitrosocysteine (Cys-94). Ser-140 is subject to Phosphoserine.

This sequence belongs to the globin family. As to quaternary structure, heterotetramer of two alpha chains and two gamma chains in fetal hemoglobin (Hb F). Red blood cells.

In terms of biological role, gamma chains make up the fetal hemoglobin F, in combination with alpha chains. The sequence is that of Hemoglobin subunit gamma-1 (HBG1) from Sapajus apella (Brown-capped capuchin).